We begin with the raw amino-acid sequence, 231 residues long: Beta-casein (231 aa).

An N-terminal signal peptide occupies residues 1-15 (MKVFILACLVALALA). Phosphoserine is present on serine 24. At threonine 27 the chain carries Phosphothreonine. Phosphoserine is present on residues serine 29, serine 31, and serine 32.

The protein belongs to the beta-casein family. As to expression, mammary gland specific. Secreted in milk.

It is found in the secreted. Important role in determination of the surface properties of the casein micelles. The chain is Beta-casein (Csn2) from Rattus norvegicus (Rat).